Reading from the N-terminus, the 593-residue chain is High affinity cGMP-specific 3',5'-cyclic phosphodiesterase 9A (593 aa).

Residues 87–142 form a disordered region; sequence SAGVEDKRTTSRGQSAERPLRDRRVVGLEQPRREGAFESGQVEPRPREPQGCCQEG. Residues 104–122 are compositionally biased toward basic and acidic residues; the sequence is RPLRDRRVVGLEQPRREGA. The PDEase domain maps to 236 to 557; that stretch reads PRRDVPTYPK…DRYEELKRID (322 aa). The active-site Proton donor is His312. 312–316 is a binding site for 3',5'-cyclic GMP; sequence HNFRH. The Zn(2+) site is built by His316, His352, and Asp353. Asp353 lines the 3',5'-cyclic GMP pocket. Position 353 (Asp353) interacts with Mg(2+). The residue at position 379 (Ser379) is a Phosphoserine. 3',5'-cyclic GMP contacts are provided by residues Asp462, Tyr484, and 512–513; that span reads AQ. Asp462 is a binding site for Zn(2+). The segment at 564–593 is disordered; it reads QKKTDSLTSGATEKSRERSRDVKNSEGDCA. Residues 576-593 show a composition bias toward basic and acidic residues; the sequence is EKSRERSRDVKNSEGDCA.

The protein belongs to the cyclic nucleotide phosphodiesterase family. PDE9 subfamily. In terms of assembly, homodimer. Zn(2+) is required as a cofactor. It depends on Mg(2+) as a cofactor.

It is found in the cell projection. It localises to the ruffle membrane. Its subcellular location is the cytoplasm. The protein localises to the perinuclear region. The protein resides in the golgi apparatus. It is found in the endoplasmic reticulum. It localises to the cell membrane. Its subcellular location is the sarcolemma. It catalyses the reaction 3',5'-cyclic GMP + H2O = GMP + H(+). It participates in purine metabolism; 3',5'-cyclic GMP degradation; GMP from 3',5'-cyclic GMP: step 1/1. With respect to regulation, specifically inhibited by a compound named 3r ((R)-2-((1-cyclopentyl-4-hydroxy-1H-pyrazolo[3,4-d]pyrimidin-6- yl)amino)-N-(4-methoxyphenyl)propanamide); the inhibitor forms a hydrogen bond with Tyr-484, Ala-512 and Gln-513. Its function is as follows. Specifically hydrolyzes the second messenger cGMP, which is a key regulator of many important physiological processes. Highly specific: compared to other members of the cyclic nucleotide phosphodiesterase family, has the highest affinity and selectivity for cGMP. Specifically regulates natriuretic-peptide-dependent cGMP signaling in heart, acting as a regulator of cardiac hypertrophy in myocytes and muscle. Does not regulate nitric oxide-dependent cGMP in heart. Additional experiments are required to confirm whether its ability to hydrolyze natriuretic-peptide-dependent cGMP is specific to heart or is a general feature of the protein. In brain, involved in cognitive function, such as learning and long-term memory. The protein is High affinity cGMP-specific 3',5'-cyclic phosphodiesterase 9A (PDE9A) of Pan troglodytes (Chimpanzee).